The primary structure comprises 103 residues: uncharacterized protein (103 aa).

An N-terminal signal peptide occupies residues 1 to 21; it reads MTGFKVSSFFYILALSRFFNA.

This is an uncharacterized protein from Saccharomyces cerevisiae (strain ATCC 204508 / S288c) (Baker's yeast).